Here is a 360-residue protein sequence, read N- to C-terminus: Photosystem II protein D1 (360 aa).

Helical transmembrane passes span 30–47 (YVGW…AAAA), 119–134 (HFLI…QWEL), and 143–157 (WICV…AAFA). H119 contacts chlorophyll a. Y127 contacts pheophytin a. Residues D171 and E190 each coordinate [CaMn4O5] cluster. Residues 198-219 (FHMAGVAGMFGGSLFSAMHGSL) form a helical membrane-spanning segment. H199 serves as a coordination point for chlorophyll a. Residues H216 and 265-266 (SF) contribute to the a quinone site. H216 is a binding site for Fe cation. Residue H273 coordinates Fe cation. A helical membrane pass occupies residues 275–289 (FLAVFPVVCVWLTSM). 4 residues coordinate [CaMn4O5] cluster: H333, E334, D343, and A345. Positions 346 to 360 (AAESTTVALTAPAIG) are excised as a propeptide.

Belongs to the reaction center PufL/M/PsbA/D family. PSII is composed of 1 copy each of membrane proteins PsbA, PsbB, PsbC, PsbD, PsbE, PsbF, PsbH, PsbI, PsbJ, PsbK, PsbL, PsbM, PsbT, PsbX, PsbY, Psb30/Ycf12, peripheral proteins PsbO, CyanoQ (PsbQ), PsbU, PsbV and a large number of cofactors. It forms dimeric complexes. The cofactor is The D1/D2 heterodimer binds P680, chlorophylls that are the primary electron donor of PSII, and subsequent electron acceptors. It shares a non-heme iron and each subunit binds pheophytin, quinone, additional chlorophylls, carotenoids and lipids. D1 provides most of the ligands for the Mn4-Ca-O5 cluster of the oxygen-evolving complex (OEC). There is also a Cl(-1) ion associated with D1 and D2, which is required for oxygen evolution. The PSII complex binds additional chlorophylls, carotenoids and specific lipids.. In terms of processing, tyr-162 forms a radical intermediate that is referred to as redox-active TyrZ, YZ or Y-Z. Post-translationally, C-terminally processed by CtpA; processing is essential to allow assembly of the oxygen-evolving complex and thus photosynthetic growth.

The protein resides in the cellular thylakoid membrane. It carries out the reaction 2 a plastoquinone + 4 hnu + 2 H2O = 2 a plastoquinol + O2. Its function is as follows. Photosystem II (PSII) is a light-driven water:plastoquinone oxidoreductase that uses light energy to abstract electrons from H(2)O, generating O(2) and a proton gradient subsequently used for ATP formation. It consists of a core antenna complex that captures photons, and an electron transfer chain that converts photonic excitation into a charge separation. The D1/D2 (PsbA/PsbD) reaction center heterodimer binds P680, the primary electron donor of PSII as well as several subsequent electron acceptors. The polypeptide is Photosystem II protein D1 (Prochlorococcus marinus (strain MIT 9515)).